We begin with the raw amino-acid sequence, 717 residues long: Myc proto-oncogene protein (717 aa).

The residue at position 217 (Thr217) is a Phosphothreonine. Residue Ser220 is modified to Phosphoserine. 3 disordered regions span residues 288 to 376 (LNQH…KNNS), 462 to 535 (TPAS…LKDP), and 555 to 584 (HSSMMSKKSRGKKVVGTSSGNTSPISSGQD). Low complexity predominate over residues 298-311 (QQQLNQQQLDEQQQ). Residues 351–360 (KSGSNASITT) are compositionally biased toward polar residues. Residues 361–376 (NNNNSNNKNNKLKNNS) show a composition bias toward low complexity. Over residues 462-488 (TPASSSPVKSVANSRYPSPSSTPYQNC) the composition is skewed to polar residues. Residues 489–523 (SSASPSYSPLSVDSSNVSSSSSSSSSQSSFTTSSS) are compositionally biased toward low complexity. The interval 625 to 638 (EKRNQHNDMERQRR) is basic motif. The bHLH domain maps to 625-677 (EKRNQHNDMERQRRIGLKNLFEALKKQIPTIRDKERAPKVNILREAAKLCIQL). Residues 639–677 (IGLKNLFEALKKQIPTIRDKERAPKVNILREAAKLCIQL) form a helix-loop-helix motif region.

This sequence belongs to the Myc transcription factor family. Efficient DNA binding requires dimerization with another bHLH protein. Binds DNA as a heterodimer with Max. Interacts with ago. Interacts with lid. Part of a complex containing lid, Myc and ash2. Component of a complex with pont and rept. Interacts with puf. Interacts with wh/wuho; the interaction may be mediated by mei-P26 and may be involved in the regulation of ribosome biogenesis. Post-translationally, probably targeted for ubiquitination by the SFC ubiquitin ligase complex member ago, leading to its proteasomal degradation. As to expression, low levels detected throughout embryo before cellular blastoderm formation, particularly concentrated in pole plasm. Zygotic expression detected during cellular blastoderm stage in endodermal anlagen of anterior and posterior midgut at both poles. After gastrulation, expression detected in invaginating ventral furrow of mesoderm. Continued expression in anterior and posterior midgut and mesoderm during germband extension. During late germ-band retraction, expression remains detectable in fusing midgut and presumed developing somatic musculature.

The protein localises to the nucleus. Its subcellular location is the nucleolus. The protein resides in the cytoplasm. Functionally, participates in the regulation of gene transcription. Binds DNA in a non-specific manner, yet also specifically recognizes the core sequence CAC[GA]TG. Seems to activate the transcription of growth-related genes; required for cellular proliferation and growth. Functions in the TORC2-mediated regulation of cell growth, acting downstream of the TORC2 complex. Inhibits the demethylase activity of Lid. Activates transcription of mbm. Has a role in ribosome biogenesis and endoreplication in fat body cells by activating the transcription of LTV1. Able to induce the SCF E3 ubiquitin-protein ligase member archipelago (ago) which functions in its degradation. It may therefore create a negative feedback loop with ago that is regulated by the ubiquitin hydrolase puf. In dopaminergic neurons, regulates dopamine levels by binding to the E-box (E1) of the dopamine decarboxylase Ddc promoter and thereby inhibiting its transcription. This regulation is required to suppress male-male courtship. Involved in the acs and insulin signaling mediated non-cell-autonomous induction of amino acid release into the hemolymph following the cytoplasmic purge response to intestinal bacterial infection; required for efficient recovery of enterocyte thickness. The polypeptide is Myc proto-oncogene protein (Drosophila melanogaster (Fruit fly)).